We begin with the raw amino-acid sequence, 203 residues long: Superoxide dismutase [Mn] (203 aa).

Residues H31, H79, D161, and H165 each coordinate Mn(2+).

This sequence belongs to the iron/manganese superoxide dismutase family. Mn(2+) serves as cofactor.

The catalysed reaction is 2 superoxide + 2 H(+) = H2O2 + O2. In terms of biological role, destroys superoxide anion radicals which are normally produced within the cells and which are toxic to biological systems. The sequence is that of Superoxide dismutase [Mn] (sod) from Haloarcula marismortui (strain ATCC 43049 / DSM 3752 / JCM 8966 / VKM B-1809) (Halobacterium marismortui).